A 346-amino-acid chain; its full sequence is MPRGQKSTLHAREKRQQTRGQTQDHQGAQITATNKKKVSFSSPLILGATIQKKSAGRSRSALKKPQRALSTTTSVDVSYKKSYKGANSKIEKKQSFSQGLSSTVQSRTDPLIMKTNMLVQFLMEMYKMKKPIMKADMLKIVQKSHKNCFPEILKKASFNMEVVFGVDLKKVDSTKDSYVLVSKMDLPNNGTVTRGRGFPKTGLLLNLLGVIFMKGNCATEEKIWEFLNKMRIYDGKKHFIFGEPRKLITQDLVKLKYLEYRQVPNSNPARYEFLWGPRAHAETSKMKVLEFWAKVNKTVPSAFQFWYEEALRDEEERVQAAAMLNDGSSAMGRKCSKAKASSSSHA.

Residues 1–35 (MPRGQKSTLHAREKRQQTRGQTQDHQGAQITATNK) form a disordered region. Positions 18 to 33 (TRGQTQDHQGAQITAT) are enriched in polar residues. Positions 111-310 (LIMKTNMLVQ…SAFQFWYEEA (200 aa)) constitute an MAGE domain.

As to expression, expressed in testis.

The protein is Melanoma-associated antigen B3 (MAGEB3) of Homo sapiens (Human).